The following is a 572-amino-acid chain: Glutamate--tRNA ligase (572 aa).

The 'HIGH' region motif lies at 107 to 117 (PNPDGAFHLGN).

The protein belongs to the class-I aminoacyl-tRNA synthetase family. Glutamate--tRNA ligase type 2 subfamily.

Its subcellular location is the cytoplasm. The catalysed reaction is tRNA(Glu) + L-glutamate + ATP = L-glutamyl-tRNA(Glu) + AMP + diphosphate. Its function is as follows. Catalyzes the attachment of glutamate to tRNA(Glu) in a two-step reaction: glutamate is first activated by ATP to form Glu-AMP and then transferred to the acceptor end of tRNA(Glu). This chain is Glutamate--tRNA ligase, found in Pyrococcus furiosus (strain ATCC 43587 / DSM 3638 / JCM 8422 / Vc1).